A 389-amino-acid polypeptide reads, in one-letter code: Cobalt-precorrin-5B C(1)-methyltransferase (389 aa).

The tract at residues 1 to 25 (MESRADHAVPADEGHGATEPPRGRD) is disordered.

Belongs to the CbiD family.

It carries out the reaction Co-precorrin-5B + S-adenosyl-L-methionine = Co-precorrin-6A + S-adenosyl-L-homocysteine. Its pathway is cofactor biosynthesis; adenosylcobalamin biosynthesis; cob(II)yrinate a,c-diamide from sirohydrochlorin (anaerobic route): step 6/10. Catalyzes the methylation of C-1 in cobalt-precorrin-5B to form cobalt-precorrin-6A. The sequence is that of Cobalt-precorrin-5B C(1)-methyltransferase from Nitratidesulfovibrio vulgaris (strain ATCC 29579 / DSM 644 / CCUG 34227 / NCIMB 8303 / VKM B-1760 / Hildenborough) (Desulfovibrio vulgaris).